The following is a 523-amino-acid chain: Ribosomal protein uS12 methylthiotransferase RimO (523 aa).

The 128-residue stretch at arginine 7–alanine 134 folds into the MTTase N-terminal domain. Residues cysteine 16, cysteine 52, cysteine 97, cysteine 192, cysteine 196, and cysteine 199 each contribute to the [4Fe-4S] cluster site. The Radical SAM core domain maps to leucine 178 to arginine 409. In terms of domain architecture, TRAM spans aspartate 411–alanine 492.

This sequence belongs to the methylthiotransferase family. RimO subfamily. [4Fe-4S] cluster is required as a cofactor.

It localises to the cytoplasm. It catalyses the reaction L-aspartate(89)-[ribosomal protein uS12]-hydrogen + (sulfur carrier)-SH + AH2 + 2 S-adenosyl-L-methionine = 3-methylsulfanyl-L-aspartate(89)-[ribosomal protein uS12]-hydrogen + (sulfur carrier)-H + 5'-deoxyadenosine + L-methionine + A + S-adenosyl-L-homocysteine + 2 H(+). Functionally, catalyzes the methylthiolation of an aspartic acid residue of ribosomal protein uS12. The protein is Ribosomal protein uS12 methylthiotransferase RimO of Frankia casuarinae (strain DSM 45818 / CECT 9043 / HFP020203 / CcI3).